The chain runs to 469 residues: Glutamate--tRNA ligase 2 (469 aa).

The 'HIGH' region signature appears at 8-18 (PSPTGFLHVGG). The 'KMSKS' region motif lies at 250 to 254 (KLSKR). K253 contacts ATP.

The protein belongs to the class-I aminoacyl-tRNA synthetase family. Glutamate--tRNA ligase type 1 subfamily. As to quaternary structure, monomer.

The protein resides in the cytoplasm. It catalyses the reaction tRNA(Glu) + L-glutamate + ATP = L-glutamyl-tRNA(Glu) + AMP + diphosphate. In terms of biological role, catalyzes the attachment of glutamate to tRNA(Glu) in a two-step reaction: glutamate is first activated by ATP to form Glu-AMP and then transferred to the acceptor end of tRNA(Glu). This Thermotoga sp. (strain RQ2) protein is Glutamate--tRNA ligase 2.